We begin with the raw amino-acid sequence, 347 residues long: 4-hydroxy-2-oxovalerate aldolase 1 (347 aa).

The Pyruvate carboxyltransferase domain occupies isoleucine 13–alanine 265. Arginine 21–aspartate 22 contributes to the substrate binding site. Aspartate 22 lines the Mn(2+) pocket. Histidine 25 acts as the Proton acceptor in catalysis. Residues serine 175 and histidine 204 each coordinate substrate. The Mn(2+) site is built by histidine 204 and histidine 206. Substrate is bound at residue tyrosine 295.

Belongs to the 4-hydroxy-2-oxovalerate aldolase family.

The enzyme catalyses (S)-4-hydroxy-2-oxopentanoate = acetaldehyde + pyruvate. In Rhodococcus erythropolis (strain PR4 / NBRC 100887), this protein is 4-hydroxy-2-oxovalerate aldolase 1.